The chain runs to 126 residues: Glycine cleavage system H protein (126 aa).

Residues 21–103 (TATIGISEHA…YEGGWIVKVK (83 aa)) enclose the Lipoyl-binding domain. Lysine 62 carries the post-translational modification N6-lipoyllysine.

It belongs to the GcvH family. The glycine cleavage system is composed of four proteins: P, T, L and H. (R)-lipoate serves as cofactor.

In terms of biological role, the glycine cleavage system catalyzes the degradation of glycine. The H protein shuttles the methylamine group of glycine from the P protein to the T protein. In Vibrio campbellii (strain ATCC BAA-1116), this protein is Glycine cleavage system H protein.